Consider the following 263-residue polypeptide: uncharacterized protein (263 aa).

7 consecutive transmembrane segments (helical) span residues M1–Q21, L38–Y58, I82–V102, G118–Y138, G151–L171, F196–T216, and F230–V250.

The protein resides in the membrane. This is an uncharacterized protein from Saccharomyces cerevisiae (strain ATCC 204508 / S288c) (Baker's yeast).